We begin with the raw amino-acid sequence, 350 residues long: Twinfilin-1 (350 aa).

Serine 2 carries the post-translational modification N-acetylserine. The ADF-H 1 domain maps to 2–139 (SHQTGIQASE…SLHGYKKYLL (138 aa)). A phosphoserine mark is found at serine 143 and serine 277. The 139-residue stretch at 175-313 (LQGVAFPISR…TADFLYDEVH (139 aa)) folds into the ADF-H 2 domain. Tyrosine 309 is modified (phosphotyrosine). The disordered stretch occupies residues 317-350 (HAHKQSFAKPKGPAGKRGIRRLIRGPAEAEATTD). Phosphothreonine is present on threonine 349.

This sequence belongs to the actin-binding proteins ADF family. Twinfilin subfamily. In terms of assembly, interacts with G-actin; ADP-actin form and capping protein (CP). May also be able to interact with TWF2 and phosphoinositides, PI(4,5)P2. When bound to PI(4,5)P2, it is down-regulated. Interacts with ACTG1. Post-translationally, phosphorylated on serine and threonine residues. As to expression, widely expressed with highest levels in brain, liver and kidney. Also expressed in heart, lung and testis. Not detected in spleen or skeletal muscle.

The protein resides in the cytoplasm. It is found in the cytoskeleton. In terms of biological role, actin-binding protein involved in motile and morphological processes. Inhibits actin polymerization, likely by sequestering G-actin. By capping the barbed ends of filaments, it also regulates motility. Seems to play an important role in clathrin-mediated endocytosis and distribution of endocytic organelles. This Mus musculus (Mouse) protein is Twinfilin-1 (Twf1).